Consider the following 170-residue polypeptide: Ubiquitin-conjugating enzyme E2 G1 (170 aa).

M1 is modified (N-acetylmethionine). T2 is modified (N-acetylthreonine; in Ubiquitin-conjugating enzyme E2 G1, N-terminally processed). A UBC core domain is found at 5-166 (QSALLLRRQL…VARCVRKSQE (162 aa)). Catalysis depends on C90, which acts as the Glycyl thioester intermediate.

The protein belongs to the ubiquitin-conjugating enzyme family. Post-translationally, autoubiquitinated.

It carries out the reaction S-ubiquitinyl-[E1 ubiquitin-activating enzyme]-L-cysteine + [E2 ubiquitin-conjugating enzyme]-L-cysteine = [E1 ubiquitin-activating enzyme]-L-cysteine + S-ubiquitinyl-[E2 ubiquitin-conjugating enzyme]-L-cysteine.. It functions in the pathway protein modification; protein ubiquitination. Its function is as follows. Accepts ubiquitin from the E1 complex and catalyzes its covalent attachment to other proteins. In vitro catalyzes 'Lys-48'-, as well as 'Lys-63'-linked polyubiquitination. May be involved in degradation of muscle-specific proteins. Mediates polyubiquitination of CYP3A4. The polypeptide is Ubiquitin-conjugating enzyme E2 G1 (UBE2G1) (Macaca fascicularis (Crab-eating macaque)).